The sequence spans 296 residues: Guided entry of tail-anchored proteins factor CAMLG (296 aa).

Residues 1-79 (MESMAVATDG…SDKLNSLSVP (79 aa)) form a disordered region. Residues 1–189 (MESMAVATDG…NTTEEFDSFR (189 aa)) are Cytoplasmic-facing. A Phosphoserine modification is found at Ser55. Basic and acidic residues predominate over residues 61–72 (SQTKSKQQDSDK). The helical transmembrane segment at 190–207 (IFRLVGCALLALGVRAFV) threads the bilayer. Over 208–212 (CKYLS) the chain is Lumenal. An intrachain disulfide couples Cys208 to Cys284. A helical transmembrane segment spans residues 213 to 231 (IFAPFLTLQLAYMGLYKYF). At 232–269 (PKSEKKIKTTVLTAALLLSGIPAEVINRSMDTYSKMGE) the chain is on the cytoplasmic side. A helical transmembrane segment spans residues 270 to 288 (VFTDLCVYFFTFIFCHELL). At 289–296 (DYWGSEVP) the chain is on the lumenal side.

In terms of assembly, component of the Golgi to ER traffic (GET) complex, which is composed of GET1/WRB, CAMLG/GET2 and GET3/TRC40. Within the complex, GET1 and CAMLG form a heterotetramer which is stabilized by phosphatidylinositol binding and which binds to the GET3 homodimer. Interacts (via C-terminus) with GET1. Interacts (via N-terminus) with GET3. GET3 shows a higher affinity for CAMLG than for GET1. Interacts (via N-terminus) with TNFRSF13B/TACI (via C-terminus). As to quaternary structure, (Microbial infection) Interacts with human herpes virus 8/HHV-8 protein K7; this interaction modulates intracellular calcium concentration. Ubiquitous. Highest levels in brain, testis and ovary.

It localises to the endoplasmic reticulum membrane. Its function is as follows. Required for the post-translational delivery of tail-anchored (TA) proteins to the endoplasmic reticulum. Together with GET1/WRB, acts as a membrane receptor for soluble GET3/TRC40, which recognizes and selectively binds the transmembrane domain of TA proteins in the cytosol. Required for the stability of GET1. Stimulates calcium signaling in T cells through its involvement in elevation of intracellular calcium. Essential for the survival of peripheral follicular B cells. This is Guided entry of tail-anchored proteins factor CAMLG from Homo sapiens (Human).